Reading from the N-terminus, the 238-residue chain is Uridylate kinase (238 aa).

12–15 (KLSG) serves as a coordination point for ATP. Residue glycine 54 coordinates UMP. Residues glycine 55 and arginine 59 each contribute to the ATP site. UMP is bound by residues aspartate 74 and 135–142 (TGNPYFTT). 4 residues coordinate ATP: threonine 162, asparagine 163, tyrosine 168, and aspartate 171.

It belongs to the UMP kinase family. As to quaternary structure, homohexamer.

It localises to the cytoplasm. The enzyme catalyses UMP + ATP = UDP + ADP. It functions in the pathway pyrimidine metabolism; CTP biosynthesis via de novo pathway; UDP from UMP (UMPK route): step 1/1. With respect to regulation, inhibited by UTP. Its function is as follows. Catalyzes the reversible phosphorylation of UMP to UDP. The polypeptide is Uridylate kinase (Nitrobacter winogradskyi (strain ATCC 25391 / DSM 10237 / CIP 104748 / NCIMB 11846 / Nb-255)).